The chain runs to 90 residues: MLDGKKLGALIKDKRKEKHLKQTEMAKALGMSRTYLSDIENGRYLPSTKTLSRIAILINLDLNVLKMTEIQVVEEGGYDRAAGTCRRQAL.

One can recognise an HTH cro/C1-type domain in the interval 11-65 (IKDKRKEKHLKQTEMAKALGMSRTYLSDIENGRYLPSTKTLSRIAILINLDLNVL). The segment at residues 22–41 (QTEMAKALGMSRTYLSDIEN) is a DNA-binding region (H-T-H motif).

This chain is ImmF control region 10 kDa protein, found in Bacillus phage phi105 (Bacteriophage phi-105).